The primary structure comprises 182 residues: MSQLDSAQLPNEANEVGEDGCYVGLTHDKLDVQRTMDRVRSPEAGAIVVFVGTTRNSFDGKPVKELNYTAYNPMALRTMISICKAMKTKHGLKGIAMVHRLGVVPISEDSIVIAVSSPHRQAAWRAGEEALEECKAKVEVWKREEFEGGEGVWRANRDGAPGQRIDTAEPAVGAGSGGEIDD.

Residues 119–120 (HR), Lys135, and 142–144 (KRE) each bind substrate. Residues 152-182 (VWRANRDGAPGQRIDTAEPAVGAGSGGEIDD) are disordered.

It belongs to the MoaE family. MOCS2B subfamily. Heterotetramer; composed of 2 small (MOCS2A) and 2 large (MOCS2B) subunits.

The protein localises to the cytoplasm. It carries out the reaction 2 [molybdopterin-synthase sulfur-carrier protein]-C-terminal-Gly-aminoethanethioate + cyclic pyranopterin phosphate + H2O = molybdopterin + 2 [molybdopterin-synthase sulfur-carrier protein]-C-terminal Gly-Gly + 2 H(+). Its pathway is cofactor biosynthesis; molybdopterin biosynthesis. Its function is as follows. Catalytic subunit of the molybdopterin synthase complex, a complex that catalyzes the conversion of precursor Z into molybdopterin. Acts by mediating the incorporation of 2 sulfur atoms from thiocarboxylated MOCS2A into precursor Z to generate a dithiolene group. This is Molybdopterin synthase catalytic subunit from Pyricularia oryzae (strain 70-15 / ATCC MYA-4617 / FGSC 8958) (Rice blast fungus).